Consider the following 166-residue polypeptide: Peptide deformylase (166 aa).

Positions 88 and 130 each coordinate Fe cation. Glutamate 131 is an active-site residue. Residue histidine 134 coordinates Fe cation.

Belongs to the polypeptide deformylase family. The cofactor is Fe(2+).

The enzyme catalyses N-terminal N-formyl-L-methionyl-[peptide] + H2O = N-terminal L-methionyl-[peptide] + formate. Removes the formyl group from the N-terminal Met of newly synthesized proteins. Requires at least a dipeptide for an efficient rate of reaction. N-terminal L-methionine is a prerequisite for activity but the enzyme has broad specificity at other positions. The sequence is that of Peptide deformylase from Thermoanaerobacter sp. (strain X514).